The sequence spans 180 residues: Small ribosomal subunit protein uS5 (180 aa).

Residues M24–V87 enclose the S5 DRBM domain.

This sequence belongs to the universal ribosomal protein uS5 family. In terms of assembly, part of the 30S ribosomal subunit. Contacts proteins S4 and S8.

With S4 and S12 plays an important role in translational accuracy. Its function is as follows. Located at the back of the 30S subunit body where it stabilizes the conformation of the head with respect to the body. In Xanthomonas axonopodis pv. citri (strain 306), this protein is Small ribosomal subunit protein uS5.